A 420-amino-acid chain; its full sequence is uncharacterized protein (420 aa).

6 consecutive transmembrane segments (helical) span residues 26–46 (IFLL…QSVI), 66–86 (SAIK…WFTF), 231–251 (VILA…ATVL), 276–296 (IPVN…PSLL), 317–337 (GFLV…SIAF), and 369–389 (IDIL…FLTI).

Belongs to the CbiQ family.

The protein localises to the cell membrane. This is an uncharacterized protein from Mycoplasma genitalium (strain ATCC 33530 / DSM 19775 / NCTC 10195 / G37) (Mycoplasmoides genitalium).